Here is a 628-residue protein sequence, read N- to C-terminus: Translation factor GUF1, mitochondrial (628 aa).

A tr-type G domain is found at 27–209 (LPSRNFSIIA…AIISRIPPPS (183 aa)). GTP contacts are provided by residues 36–43 (AHIDHGKS), 102–106 (DTPGH), and 156–159 (NKID).

This sequence belongs to the TRAFAC class translation factor GTPase superfamily. Classic translation factor GTPase family. LepA subfamily.

It is found in the mitochondrion inner membrane. The catalysed reaction is GTP + H2O = GDP + phosphate + H(+). Its function is as follows. Promotes mitochondrial protein synthesis. May act as a fidelity factor of the translation reaction, by catalyzing a one-codon backward translocation of tRNAs on improperly translocated ribosomes. Binds to mitochondrial ribosomes in a GTP-dependent manner. This chain is Translation factor GUF1, mitochondrial, found in Laccaria bicolor (strain S238N-H82 / ATCC MYA-4686) (Bicoloured deceiver).